A 97-amino-acid polypeptide reads, in one-letter code: U-reduvitoxin-Pr11a (97 aa).

The N-terminal stretch at 1 to 20 is a signal peptide; that stretch reads MKTALFLVFALAFIAVEGKM. 2 consecutive Pacifastin domains span residues 22–59 and 62–97; these read RACS…CPPR and EKSC…KLCL. Disulfide bonds link C24-C42, C37-C56, and C40-C51. The tract at residues 57-59 is pro-Pro-Arg motif necessary for proteolytic processing; that stretch reads PPR. Disulfide bonds link C65-C82, C77-C96, and C80-C91.

Belongs to the protease inhibitor I19 family. As to expression, expressed by the venom gland.

It localises to the secreted. Its function is as follows. Inhibits trypsin activity and prophenoloxidase (PPO) activation, an enzyme essential for both clotting and insect innate immune responses. It does not inhibit activity of chymotrypsin and protease K, and has no effect on phenoloxidase (PO) activity. This chain is U-reduvitoxin-Pr11a, found in Platymeris rhadamanthus (Red spot assassin bug).